A 240-amino-acid polypeptide reads, in one-letter code: Guanine nucleotide exchange factor sopE2 (240 aa).

A GEF catalytic domain region spans residues 78 to 240 (LTSKTVKDFM…IANKYLQNAS (163 aa)).

It belongs to the GEF (guanine exchange factor) SopE family.

Its subcellular location is the secreted. In terms of biological role, activator for CDC42 by directly engaging this Rho GTPase and acting as potent guanine nucleotide exchange factor (GEF). This activation results in actin cytoskeleton rearrangements and stimulates membrane ruffling, promoting bacterial entry into non-phagocytic cells. Chaperone InvB is required for secretion, translocation and stabilization of intracellular levels of sopE2. This chain is Guanine nucleotide exchange factor sopE2 (sopE2), found in Salmonella paratyphi A (strain ATCC 9150 / SARB42).